The primary structure comprises 90 residues: Potassium channel toxin BmTXK-beta (90 aa).

An N-terminal signal peptide occupies residues 1–22; sequence MMKQQFFLFLAVIVMISSVIEA. Positions 23 to 29 are excised as a propeptide; sequence GRGKEIM. Positions 55-90 constitute a BetaSPN-type CS-alpha/beta domain; it reads EYACPVIEKWCEDHCAAKKAIGKCEDTECKCLKLRK. 3 disulfides stabilise this stretch: Cys-58-Cys-78, Cys-65-Cys-83, and Cys-69-Cys-85.

Belongs to the long chain scorpion toxin family. Class 2 subfamily. In terms of tissue distribution, expressed by the venom gland.

It localises to the secreted. In terms of biological role, this recombinant peptide reversibly and dose-dependently inhibits the transient outward potassium current (I(To)) of rabbit atrial myocyte and prolongs the action potential duration of rabbit atrial myocyte without affecting the action potential amplitude. Thus, the voltage-gated potassium channels Kv4.1/KCND1, Kv4.2/KCND2, Kv4.3/KCND3 may be the target of this toxin. This is Potassium channel toxin BmTXK-beta from Olivierus martensii (Manchurian scorpion).